Consider the following 294-residue polypeptide: 4-hydroxy-tetrahydrodipicolinate synthase (294 aa).

Residue Thr-48 coordinates pyruvate. Tyr-136 acts as the Proton donor/acceptor in catalysis. Catalysis depends on Lys-164, which acts as the Schiff-base intermediate with substrate. Pyruvate is bound at residue Val-206.

It belongs to the DapA family. As to quaternary structure, homotetramer; dimer of dimers.

It is found in the cytoplasm. It carries out the reaction L-aspartate 4-semialdehyde + pyruvate = (2S,4S)-4-hydroxy-2,3,4,5-tetrahydrodipicolinate + H2O + H(+). Its pathway is amino-acid biosynthesis; L-lysine biosynthesis via DAP pathway; (S)-tetrahydrodipicolinate from L-aspartate: step 3/4. In terms of biological role, catalyzes the condensation of (S)-aspartate-beta-semialdehyde [(S)-ASA] and pyruvate to 4-hydroxy-tetrahydrodipicolinate (HTPA). The polypeptide is 4-hydroxy-tetrahydrodipicolinate synthase (Desulforudis audaxviator (strain MP104C)).